Reading from the N-terminus, the 359-residue chain is Palmitoyltransferase ERF2 (359 aa).

Residues 1-21 (MALVSRRSTRSESTSITKEEH) are disordered. Residues 1 to 75 (MALVSRRSTR…RFRTVKGAKP (75 aa)) lie on the Cytoplasmic side of the membrane. The chain crosses the membrane as a helical span at residues 76–96 (LWLGVLLAIVCPMVLFSIFEA). At 97-104 (HKLWHTQN) the chain is on the lumenal side. Residues 105-125 (GYKVLVIFFYYFWVITLASFI) traverse the membrane as a helical segment. The Cytoplasmic segment spans residues 126–217 (RTATSDPGVL…NCIGKRNYRF (92 aa)). In terms of domain architecture, DHHC spans 173-223 (KYCPSCRIWRPPRSSHCSTCNVCVMVHDHHCIWVNNCIGKRNYRFFLIFLL). The active-site S-palmitoyl cysteine intermediate is the cysteine 203. Residues 218–238 (FLIFLLGAILSSVILLTNCAI) traverse the membrane as a helical segment. Residues 239–250 (HIARESGGPRDC) are Lumenal-facing. Residues 251–271 (PVAILLLCYAGLTLWYPAILF) traverse the membrane as a helical segment. Topologically, residues 272-359 (TYHIFMAGNQ…AHSFEKIQKI (88 aa)) are cytoplasmic.

Belongs to the DHHC palmitoyltransferase family. ERF2/ZDHHC9 subfamily. Interacts with SHR5. Autopalmitoylated.

The protein resides in the endoplasmic reticulum membrane. It carries out the reaction L-cysteinyl-[protein] + hexadecanoyl-CoA = S-hexadecanoyl-L-cysteinyl-[protein] + CoA. In terms of biological role, the ERF2-SHR5 complex is a palmitoyltransferase specific for Ras proteins. Palmitoylates RAS2, which is required for its proper plasma membrane localization. The polypeptide is Palmitoyltransferase ERF2 (ERF2) (Saccharomyces cerevisiae (strain ATCC 204508 / S288c) (Baker's yeast)).